The primary structure comprises 384 residues: 8-amino-7-oxononanoate synthase (384 aa).

Arg21 serves as a coordination point for substrate. 108–109 provides a ligand contact to pyridoxal 5'-phosphate; that stretch reads GY. His133 is a substrate binding site. Positions 179, 207, and 233 each coordinate pyridoxal 5'-phosphate. Lys236 carries the post-translational modification N6-(pyridoxal phosphate)lysine. Thr350 serves as a coordination point for substrate.

This sequence belongs to the class-II pyridoxal-phosphate-dependent aminotransferase family. BioF subfamily. In terms of assembly, homodimer. Requires pyridoxal 5'-phosphate as cofactor.

It catalyses the reaction 6-carboxyhexanoyl-[ACP] + L-alanine + H(+) = (8S)-8-amino-7-oxononanoate + holo-[ACP] + CO2. It participates in cofactor biosynthesis; biotin biosynthesis. Catalyzes the decarboxylative condensation of pimeloyl-[acyl-carrier protein] and L-alanine to produce 8-amino-7-oxononanoate (AON), [acyl-carrier protein], and carbon dioxide. In Buchnera aphidicola subsp. Baizongia pistaciae (strain Bp), this protein is 8-amino-7-oxononanoate synthase.